The primary structure comprises 300 residues: Glutamyl-Q tRNA(Asp) synthetase (300 aa).

L-glutamate contacts are provided by residues 8–12 (RFAPS) and E44. The 'HIGH' region motif lies at 11–21 (PSPTGALHAGS). Positions 100, 102, 126, and 130 each coordinate Zn(2+). Positions 190 and 208 each coordinate L-glutamate. Positions 246-250 (KLSKQ) match the 'KMSKS' region motif. Position 249 (K249) interacts with ATP.

It belongs to the class-I aminoacyl-tRNA synthetase family. GluQ subfamily. Zn(2+) is required as a cofactor.

In terms of biological role, catalyzes the tRNA-independent activation of glutamate in presence of ATP and the subsequent transfer of glutamate onto a tRNA(Asp). Glutamate is transferred on the 2-amino-5-(4,5-dihydroxy-2-cyclopenten-1-yl) moiety of the queuosine in the wobble position of the QUC anticodon. The polypeptide is Glutamyl-Q tRNA(Asp) synthetase (Leptothrix cholodnii (strain ATCC 51168 / LMG 8142 / SP-6) (Leptothrix discophora (strain SP-6))).